The primary structure comprises 692 residues: Small conductance calcium-activated potassium channel-like protein 3 (692 aa).

Residues 270-290 (SLYLALFGVILMLVESEITAE) traverse the membrane as a helical segment. A helical transmembrane segment spans residues 313–333 (TIALLYHIILYHLNDIVLELV). Residues 349–369 (VIQFCIEFICCGICPLPGSGE) traverse the membrane as a helical segment. A helical membrane pass occupies residues 401–421 (VILSCFMLCRSYLFARFMVLH). The chain crosses the membrane as a helical span at residues 455–475 (PVLFLTTFTFIFWIIMSWMFV). An intramembrane region (pore-forming) is located at residues 492–512 (YSNSLWFIAITFMLNGYGDIV). The chain crosses the membrane as a helical span at residues 520–540 (FIAIFVGVVGAVISSILIAVI). The segment covering 667 to 683 (HSTPNVPHLQGLTSSPV) has biased composition (polar residues). The tract at residues 667–692 (HSTPNVPHLQGLTSSPVPSDRYDNRF) is disordered.

The protein belongs to the potassium channel KCNN family. SK subfamily. As to quaternary structure, heterooligomer.

The protein localises to the membrane. In terms of biological role, forms a voltage-independent potassium channel activated by intracellular calcium. This Caenorhabditis elegans protein is Small conductance calcium-activated potassium channel-like protein 3 (kcnl-3).